An 865-amino-acid polypeptide reads, in one-letter code: FO synthase (865 aa).

The interval 1 to 21 (MIEGVTELATPNVPPAPPSPS) is disordered. 2 Radical SAM core domains span residues 76–320 (ITYS…LGPD) and 544–785 (VTYV…DNIQ). A cofG-like region spans residues 77–409 (TYSRNVFIPL…PRIGAHVAAL (333 aa)). Cysteine 90, cysteine 94, cysteine 97, cysteine 558, cysteine 562, and cysteine 565 together coordinate [4Fe-4S] cluster. The tract at residues 521–854 (DGAELDAVAA…RERTTVYGRV (334 aa)) is cofH-like.

The protein in the N-terminal section; belongs to the radical SAM superfamily. CofG family. In the C-terminal section; belongs to the radical SAM superfamily. CofH family. Requires [4Fe-4S] cluster as cofactor.

The enzyme catalyses 5-amino-6-(D-ribitylamino)uracil + L-tyrosine + S-adenosyl-L-methionine = 5-amino-5-(4-hydroxybenzyl)-6-(D-ribitylimino)-5,6-dihydrouracil + 2-iminoacetate + 5'-deoxyadenosine + L-methionine + H(+). The catalysed reaction is 5-amino-5-(4-hydroxybenzyl)-6-(D-ribitylimino)-5,6-dihydrouracil + S-adenosyl-L-methionine = 7,8-didemethyl-8-hydroxy-5-deazariboflavin + 5'-deoxyadenosine + L-methionine + NH4(+) + H(+). Its pathway is cofactor biosynthesis; coenzyme F0 biosynthesis. Functionally, catalyzes the radical-mediated synthesis of 7,8-didemethyl-8-hydroxy-5-deazariboflavin (FO) from 5-amino-6-(D-ribitylamino)uracil and L-tyrosine. This Nocardia farcinica (strain IFM 10152) protein is FO synthase (fbiC).